Reading from the N-terminus, the 432-residue chain is Ribosomal protein uS12 methylthiotransferase RimO (432 aa).

Positions 4–122 (NKVDIITLGC…LISDLGKSYH (119 aa)) constitute an MTTase N-terminal domain. C13, C51, C85, C146, C150, and C153 together coordinate [4Fe-4S] cluster. Residues 132–363 (TTPRHYAYVK…MRVQEGISAD (232 aa)) enclose the Radical SAM core domain. Residues 366–432 (ASKVGQTFRV…AFDLYGKVLN (67 aa)) form the TRAM domain.

It belongs to the methylthiotransferase family. RimO subfamily. [4Fe-4S] cluster serves as cofactor.

The protein resides in the cytoplasm. It carries out the reaction L-aspartate(89)-[ribosomal protein uS12]-hydrogen + (sulfur carrier)-SH + AH2 + 2 S-adenosyl-L-methionine = 3-methylsulfanyl-L-aspartate(89)-[ribosomal protein uS12]-hydrogen + (sulfur carrier)-H + 5'-deoxyadenosine + L-methionine + A + S-adenosyl-L-homocysteine + 2 H(+). In terms of biological role, catalyzes the methylthiolation of an aspartic acid residue of ribosomal protein uS12. The protein is Ribosomal protein uS12 methylthiotransferase RimO of Parabacteroides distasonis (strain ATCC 8503 / DSM 20701 / CIP 104284 / JCM 5825 / NCTC 11152).